Consider the following 125-residue polypeptide: Cysteine proteinase inhibitor 3 (125 aa).

The N-terminal stretch at 1–22 (MESKTFWIVTLLLCGTIQLAIC) is a signal peptide. The Cystatin domain maps to 36–124 (GGVHDLRGNQ…KQLQEFKESS (89 aa)). The Secondary area of contact signature appears at 80 to 84 (QVVAG).

Belongs to the cystatin family. Phytocystatin subfamily.

Its subcellular location is the secreted. Specific inhibitor of cysteine proteinases. Probably involved in the regulation of endogenous processes and in defense against pests and pathogens. The chain is Cysteine proteinase inhibitor 3 (CYS3) from Arabidopsis thaliana (Mouse-ear cress).